The following is a 120-amino-acid chain: NAD(P)H-quinone oxidoreductase subunit 3, chloroplastic (120 aa).

The next 3 helical transmembrane spans lie at 9–29, 64–84, and 88–108; these read IFWTFLIIASLIPILAFWISG, MFALVFVVFDVETVFLYPWAM, and VLGVSVFIEAFIFVLILVVGL.

This sequence belongs to the complex I subunit 3 family. As to quaternary structure, NDH is composed of at least 16 different subunits, 5 of which are encoded in the nucleus.

The protein resides in the plastid. It localises to the chloroplast thylakoid membrane. It carries out the reaction a plastoquinone + NADH + (n+1) H(+)(in) = a plastoquinol + NAD(+) + n H(+)(out). It catalyses the reaction a plastoquinone + NADPH + (n+1) H(+)(in) = a plastoquinol + NADP(+) + n H(+)(out). Functionally, NDH shuttles electrons from NAD(P)H:plastoquinone, via FMN and iron-sulfur (Fe-S) centers, to quinones in the photosynthetic chain and possibly in a chloroplast respiratory chain. The immediate electron acceptor for the enzyme in this species is believed to be plastoquinone. Couples the redox reaction to proton translocation, and thus conserves the redox energy in a proton gradient. The sequence is that of NAD(P)H-quinone oxidoreductase subunit 3, chloroplastic from Agrostis stolonifera (Creeping bentgrass).